We begin with the raw amino-acid sequence, 648 residues long: Threonine--tRNA ligase (648 aa).

The region spanning M1–T63 is the TGS domain. The segment at D247 to P544 is catalytic. 3 residues coordinate Zn(2+): C344, H395, and H521.

This sequence belongs to the class-II aminoacyl-tRNA synthetase family. In terms of assembly, homodimer. The cofactor is Zn(2+).

The protein localises to the cytoplasm. The enzyme catalyses tRNA(Thr) + L-threonine + ATP = L-threonyl-tRNA(Thr) + AMP + diphosphate + H(+). Functionally, catalyzes the attachment of threonine to tRNA(Thr) in a two-step reaction: L-threonine is first activated by ATP to form Thr-AMP and then transferred to the acceptor end of tRNA(Thr). Also edits incorrectly charged L-seryl-tRNA(Thr). This Paracoccus denitrificans (strain Pd 1222) protein is Threonine--tRNA ligase.